The primary structure comprises 371 residues: Aminomethyltransferase (371 aa).

The protein belongs to the GcvT family. The glycine cleavage system is composed of four proteins: P, T, L and H.

It catalyses the reaction N(6)-[(R)-S(8)-aminomethyldihydrolipoyl]-L-lysyl-[protein] + (6S)-5,6,7,8-tetrahydrofolate = N(6)-[(R)-dihydrolipoyl]-L-lysyl-[protein] + (6R)-5,10-methylene-5,6,7,8-tetrahydrofolate + NH4(+). The glycine cleavage system catalyzes the degradation of glycine. In Pectobacterium atrosepticum (strain SCRI 1043 / ATCC BAA-672) (Erwinia carotovora subsp. atroseptica), this protein is Aminomethyltransferase.